The chain runs to 386 residues: ADP,ATP carrier protein, mitochondrial (386 aa).

The N-terminal 76 residues, 1–76 (ADNQHPTVYQ…ANASPVFVQA (76 aa)), are a transit peptide targeting the mitochondrion. 3 Solcar repeats span residues 83 to 176 (AAFA…FKRL), 188 to 281 (KWFA…LKPV), and 289 to 375 (DSFF…LQVI). The next 5 helical transmembrane spans lie at 85-112 (FATD…VKLL), 153-177 (TANV…KRLF), 186-206 (YWKW…SSLL), 257-278 (FNIS…YDSL), and 292-312 (FASF…SYPI). Positions 158 and 170 each coordinate ADP. Arg316 provides a ligand contact to ADP. The tract at residues 316–321 (RRRMMM) is important for transport activity. A Nucleotide carrier signature motif motif is present at residues 316 to 321 (RRRMMM). Residues 352 to 372 (AGANVLRAVAGAGVLAGYDKL) traverse the membrane as a helical segment.

This sequence belongs to the mitochondrial carrier (TC 2.A.29) family. As to quaternary structure, monomer.

The protein localises to the mitochondrion inner membrane. The catalysed reaction is ADP(in) + ATP(out) = ADP(out) + ATP(in). With respect to regulation, the matrix-open state (m-state) is inhibited by the membrane-permeable bongkrekic acid (BKA). The cytoplasmic-open state (c-state) is inhibited by the membrane-impermeable toxic inhibitor carboxyatractyloside (CATR). ADP:ATP antiporter that mediates import of ADP into the mitochondrial matrix for ATP synthesis, and export of ATP out to fuel the cell. Cycles between the cytoplasmic-open state (c-state) and the matrix-open state (m-state): operates by the alternating access mechanism with a single substrate-binding site intermittently exposed to either the cytosolic (c-state) or matrix (m-state) side of the inner mitochondrial membrane. This Solanum tuberosum (Potato) protein is ADP,ATP carrier protein, mitochondrial (ANT1).